The sequence spans 477 residues: Aspartyl/glutamyl-tRNA(Asn/Gln) amidotransferase subunit B (477 aa).

It belongs to the GatB/GatE family. GatB subfamily. As to quaternary structure, heterotrimer of A, B and C subunits.

It carries out the reaction L-glutamyl-tRNA(Gln) + L-glutamine + ATP + H2O = L-glutaminyl-tRNA(Gln) + L-glutamate + ADP + phosphate + H(+). The catalysed reaction is L-aspartyl-tRNA(Asn) + L-glutamine + ATP + H2O = L-asparaginyl-tRNA(Asn) + L-glutamate + ADP + phosphate + 2 H(+). In terms of biological role, allows the formation of correctly charged Asn-tRNA(Asn) or Gln-tRNA(Gln) through the transamidation of misacylated Asp-tRNA(Asn) or Glu-tRNA(Gln) in organisms which lack either or both of asparaginyl-tRNA or glutaminyl-tRNA synthetases. The reaction takes place in the presence of glutamine and ATP through an activated phospho-Asp-tRNA(Asn) or phospho-Glu-tRNA(Gln). The sequence is that of Aspartyl/glutamyl-tRNA(Asn/Gln) amidotransferase subunit B from Legionella pneumophila subsp. pneumophila (strain Philadelphia 1 / ATCC 33152 / DSM 7513).